Consider the following 154-residue polypeptide: Cyanate hydratase (154 aa).

Catalysis depends on residues Arg100, Glu103, and Ser126.

Belongs to the cyanase family.

It catalyses the reaction cyanate + hydrogencarbonate + 3 H(+) = NH4(+) + 2 CO2. In terms of biological role, catalyzes the reaction of cyanate with bicarbonate to produce ammonia and carbon dioxide. This Aspergillus terreus (strain NIH 2624 / FGSC A1156) protein is Cyanate hydratase.